Consider the following 159-residue polypeptide: U1 small nuclear ribonucleoprotein C (159 aa).

The Matrin-type zinc-finger motif lies at 4-36; the sequence is FYCDYCDTYLTHDSPSVRKTHCSGRKHKENVKD. Tyrosine 8 bears the Phosphotyrosine mark. Serine 17 carries the phosphoserine modification. An N6-acetyllysine modification is found at lysine 52. Disordered regions lie at residues 62 to 96 and 140 to 159; these read IPPTPFSAPPPAGAMIPPPPSLPGPPRPGMMPAPH and RPPARPMMVPTRPGMTRPDR. Over residues 63–92 the composition is skewed to pro residues; sequence PPTPFSAPPPAGAMIPPPPSLPGPPRPGMM.

It belongs to the U1 small nuclear ribonucleoprotein C family. As to quaternary structure, component of the U1 snRNP. The U1 snRNP is composed of the U1 snRNA and the 7 core Sm proteins SNRPB, SNRPD1, SNRPD2, SNRPD3, SNRPE, SNRPF and SNRPG that assemble in a heptameric protein ring on the Sm site of the small nuclear RNA to form the core snRNP, and at least 3 U1 snRNP-specific proteins SNRNP70/U1-70K, SNRPA/U1-A and SNRPC/U1-C. SNRPC/U1-C interacts with U1 snRNA and the 5' splice-site region of the pre-mRNA. Interacts (via N-terminus) with TIA1 (via C-terminus); thereby promoting spliceosomal U1 snRNP recruitment to 5' splice sites.

It localises to the nucleus. Functionally, component of the spliceosomal U1 snRNP, which is essential for recognition of the pre-mRNA 5' splice-site and the subsequent assembly of the spliceosome. SNRPC/U1-C is directly involved in initial 5' splice-site recognition for both constitutive and regulated alternative splicing. The interaction with the 5' splice-site seems to precede base-pairing between the pre-mRNA and the U1 snRNA. Stimulates commitment or early (E) complex formation by stabilizing the base pairing of the 5' end of the U1 snRNA and the 5' splice-site region. The protein is U1 small nuclear ribonucleoprotein C of Homo sapiens (Human).